A 130-amino-acid polypeptide reads, in one-letter code: Small ribosomal subunit protein uS9 (130 aa).

The interval 109–130 (RKKERKKYGQPGARAKFQYSKR) is disordered.

The protein belongs to the universal ribosomal protein uS9 family.

This chain is Small ribosomal subunit protein uS9, found in Maridesulfovibrio salexigens (strain ATCC 14822 / DSM 2638 / NCIMB 8403 / VKM B-1763) (Desulfovibrio salexigens).